A 109-amino-acid polypeptide reads, in one-letter code: Thiosulfate sulfurtransferase GlpE (109 aa).

The region spanning 16 to 104 (REQGAVVVDI…WRSTYPAETA (89 aa)) is the Rhodanese domain. C64 (cysteine persulfide intermediate) is an active-site residue.

Belongs to the GlpE family.

Its subcellular location is the cytoplasm. The enzyme catalyses thiosulfate + hydrogen cyanide = thiocyanate + sulfite + 2 H(+). The catalysed reaction is thiosulfate + [thioredoxin]-dithiol = [thioredoxin]-disulfide + hydrogen sulfide + sulfite + 2 H(+). In terms of biological role, transferase that catalyzes the transfer of sulfur from thiosulfate to thiophilic acceptors such as cyanide or dithiols. May function in a CysM-independent thiosulfate assimilation pathway by catalyzing the conversion of thiosulfate to sulfite, which can then be used for L-cysteine biosynthesis. In Pseudomonas fluorescens (strain ATCC BAA-477 / NRRL B-23932 / Pf-5), this protein is Thiosulfate sulfurtransferase GlpE.